The primary structure comprises 300 residues: F-box/LRR-repeat protein 15 (300 aa).

Methionine 1 carries the post-translational modification N-acetylmethionine. The F-box domain maps to leucine 19–aspartate 66. Residues asparagine 113 to arginine 269 are interaction with SMURF1. 5 LRR repeats span residues arginine 141–alanine 162, alanine 167–alanine 188, glycine 194–alanine 215, glutamine 220–alanine 241, and alanine 246–arginine 267.

Belongs to the FBXL15 family. Part of the SCF (SKP1-CUL1-F-box) E3 ubiquitin-protein ligase complex SCF(FBXL15) composed of CUL1, SKP1, RBX1 and FBXL15. Expressed in heart, liver, spleen, bone, muscle, brain and kidney (at protein level).

It is found in the cytoplasm. Its pathway is protein modification; protein ubiquitination. Its function is as follows. Substrate recognition component of a SCF (SKP1-CUL1-F-box protein) E3 ubiquitin-protein ligase complex which mediates the ubiquitination and subsequent proteasomal degradation of SMURF1, thereby acting as a positive regulator of the BMP signaling pathway. Required for dorsal/ventral pattern formation and bone mass maintenance. Also mediates ubiquitination of SMURF2 and WWP2. This is F-box/LRR-repeat protein 15 (Fbxl15) from Mus musculus (Mouse).